Here is a 544-residue protein sequence, read N- to C-terminus: Chaperonin GroEL 1 (544 aa).

Residues threonine 29–proline 32, aspartate 86–threonine 90, glycine 413, and aspartate 495 each bind ATP. Residues proline 525–tyrosine 544 form a disordered region. A compositionally biased stretch (polar residues) spans lysine 528–glycine 538.

Belongs to the chaperonin (HSP60) family. Forms a cylinder of 14 subunits composed of two heptameric rings stacked back-to-back. Interacts with the co-chaperonin GroES.

The protein resides in the cytoplasm. It carries out the reaction ATP + H2O + a folded polypeptide = ADP + phosphate + an unfolded polypeptide.. Its function is as follows. Together with its co-chaperonin GroES, plays an essential role in assisting protein folding. The GroEL-GroES system forms a nano-cage that allows encapsulation of the non-native substrate proteins and provides a physical environment optimized to promote and accelerate protein folding. The polypeptide is Chaperonin GroEL 1 (Synechococcus sp. (strain JA-2-3B'a(2-13)) (Cyanobacteria bacterium Yellowstone B-Prime)).